Reading from the N-terminus, the 305-residue chain is tRNA pseudouridine synthase B (305 aa).

Asp41 serves as the catalytic Nucleophile.

This sequence belongs to the pseudouridine synthase TruB family. Type 1 subfamily.

It catalyses the reaction uridine(55) in tRNA = pseudouridine(55) in tRNA. Functionally, responsible for synthesis of pseudouridine from uracil-55 in the psi GC loop of transfer RNAs. This is tRNA pseudouridine synthase B from Prochlorococcus marinus (strain MIT 9515).